A 203-amino-acid polypeptide reads, in one-letter code: Small ribosomal subunit protein uS4 (203 aa).

In terms of domain architecture, S4 RNA-binding spans 93 to 155; it reads RRLDSIVYRL…SKNLQQIRDA (63 aa).

This sequence belongs to the universal ribosomal protein uS4 family. As to quaternary structure, part of the 30S ribosomal subunit. Contacts protein S5. The interaction surface between S4 and S5 is involved in control of translational fidelity.

Functionally, one of the primary rRNA binding proteins, it binds directly to 16S rRNA where it nucleates assembly of the body of the 30S subunit. Its function is as follows. With S5 and S12 plays an important role in translational accuracy. The polypeptide is Small ribosomal subunit protein uS4 (Lactobacillus acidophilus (strain ATCC 700396 / NCK56 / N2 / NCFM)).